Here is a 339-residue protein sequence, read N- to C-terminus: Phosphoribosylformylglycinamidine cyclo-ligase (339 aa).

It belongs to the AIR synthase family.

The protein resides in the cytoplasm. The enzyme catalyses 2-formamido-N(1)-(5-O-phospho-beta-D-ribosyl)acetamidine + ATP = 5-amino-1-(5-phospho-beta-D-ribosyl)imidazole + ADP + phosphate + H(+). The protein operates within purine metabolism; IMP biosynthesis via de novo pathway; 5-amino-1-(5-phospho-D-ribosyl)imidazole from N(2)-formyl-N(1)-(5-phospho-D-ribosyl)glycinamide: step 2/2. The polypeptide is Phosphoribosylformylglycinamidine cyclo-ligase (Methanobrevibacter smithii (strain ATCC 35061 / DSM 861 / OCM 144 / PS)).